The following is a 215-amino-acid chain: Cytochrome b6 (215 aa).

Residues 32–52 (IFYCLGGITLTCFLVQVATGF) form a helical membrane-spanning segment. Cysteine 35 contacts heme c. The heme b site is built by histidine 86 and histidine 100. The next 3 helical transmembrane spans lie at 90-110 (ASMM…TGGF), 116-136 (LTWV…VTGY), and 186-206 (LHTF…FLMI). Positions 187 and 202 each coordinate heme b.

This sequence belongs to the cytochrome b family. PetB subfamily. The 4 large subunits of the cytochrome b6-f complex are cytochrome b6, subunit IV (17 kDa polypeptide, PetD), cytochrome f and the Rieske protein, while the 4 small subunits are PetG, PetL, PetM and PetN. The complex functions as a dimer. The cofactor is heme b. Heme c is required as a cofactor.

The protein localises to the plastid. It localises to the chloroplast thylakoid membrane. Component of the cytochrome b6-f complex, which mediates electron transfer between photosystem II (PSII) and photosystem I (PSI), cyclic electron flow around PSI, and state transitions. The chain is Cytochrome b6 from Gossypium barbadense (Sea Island cotton).